The chain runs to 1409 residues: DNA-directed RNA polymerase subunit beta' (1409 aa).

Positions 70, 72, 85, and 88 each coordinate Zn(2+). Residues Asp-461, Asp-463, and Asp-465 each coordinate Mg(2+). Zn(2+) contacts are provided by Cys-833, Cys-907, Cys-914, and Cys-917. A disordered region spans residues Glu-1389–Ala-1409.

It belongs to the RNA polymerase beta' chain family. In terms of assembly, the RNAP catalytic core consists of 2 alpha, 1 beta, 1 beta' and 1 omega subunit. When a sigma factor is associated with the core the holoenzyme is formed, which can initiate transcription. Mg(2+) is required as a cofactor. Zn(2+) serves as cofactor.

The enzyme catalyses RNA(n) + a ribonucleoside 5'-triphosphate = RNA(n+1) + diphosphate. Its function is as follows. DNA-dependent RNA polymerase catalyzes the transcription of DNA into RNA using the four ribonucleoside triphosphates as substrates. The protein is DNA-directed RNA polymerase subunit beta' of Pelobacter propionicus (strain DSM 2379 / NBRC 103807 / OttBd1).